The primary structure comprises 514 residues: Probable E3 ubiquitin-protein ligase ARI10 (514 aa).

The segment covering Met1–Asn18 has biased composition (acidic residues). Residues Met1–Ser26 form a disordered region. A TRIAD supradomain region spans residues Val117–Val322. The Zn(2+) site is built by Cys121, Cys124, Cys138, His140, Cys143, Cys146, Cys166, Cys171, Cys210, Cys215, Cys231, Cys233, Cys238, Cys241, His246, Cys251, Cys278, and Cys281. An RING-type 1 zinc finger spans residues Cys121–Cys171. The segment at Asp190–Cys251 adopts an IBR-type zinc-finger fold. The RING-type 2; atypical zinc finger occupies Cys278–Cys308. Cys291 is a catalytic residue. The Zn(2+) site is built by Cys296, Cys300, Cys305, Cys308, His315, and Cys318.

The protein belongs to the RBR family. Ariadne subfamily. Zn(2+) serves as cofactor.

It carries out the reaction [E2 ubiquitin-conjugating enzyme]-S-ubiquitinyl-L-cysteine + [acceptor protein]-L-lysine = [E2 ubiquitin-conjugating enzyme]-L-cysteine + [acceptor protein]-N(6)-ubiquitinyl-L-lysine.. It participates in protein modification; protein ubiquitination. Functionally, might act as an E3 ubiquitin-protein ligase, or as part of E3 complex, which accepts ubiquitin from specific E2 ubiquitin-conjugating enzymes and then transfers it to substrates. This chain is Probable E3 ubiquitin-protein ligase ARI10 (ARI10), found in Arabidopsis thaliana (Mouse-ear cress).